Consider the following 247-residue polypeptide: MSEATTTLDGWYCLHDLRSIDWAAWKTLSSDERGQAVSEFLNVVEKWNDVAAAKKGSHAMYTVVGQKADIMLMILRPTMEELNEIETELNKTTLAEYMVPAYSYVSVVELSNYLPADEDPYQNPQILARLYPELPKANHICFYPMDKRRQGDDNWYMLPMEERKKMMYSHSKIGRQYAGKVRQVISGSVGFDDFEWGVTLFADDVLQFKKLIYEMRFDEVSARYGEFGTFFVGNILPDEKVEKFLHI.

Fe-coproporphyrin III-binding positions include arginine 129, 143–147, histidine 170, glutamine 183, and serine 221; that span reads YPMDK. The active site involves tyrosine 143.

This sequence belongs to the ChdC family. Type 1 subfamily. Fe-coproporphyrin III is required as a cofactor.

It catalyses the reaction Fe-coproporphyrin III + 2 H2O2 + 2 H(+) = heme b + 2 CO2 + 4 H2O. The enzyme catalyses Fe-coproporphyrin III + H2O2 + H(+) = harderoheme III + CO2 + 2 H2O. It carries out the reaction harderoheme III + H2O2 + H(+) = heme b + CO2 + 2 H2O. The protein operates within porphyrin-containing compound metabolism; protoheme biosynthesis. In terms of biological role, involved in coproporphyrin-dependent heme b biosynthesis. Catalyzes the decarboxylation of Fe-coproporphyrin III (coproheme) to heme b (protoheme IX), the last step of the pathway. The reaction occurs in a stepwise manner with a three-propionate intermediate. This chain is Coproheme decarboxylase, found in Bacillus anthracis.